Reading from the N-terminus, the 574-residue chain is Laccase-12 (574 aa).

The N-terminal stretch at 1–27 (MAAASSVLRCCLLVAALMTLSAMGAEA) is a signal peptide. Plastocyanin-like domains follow at residues 35 to 151 (DVQT…PPAG) and 161 to 314 (EEVP…YDDP). N-linked (GlcNAc...) asparagine glycosylation is present at N81. Cu cation contacts are provided by H85, H87, H130, and H132. N-linked (GlcNAc...) asparagine glycans are attached at residues N173, N190, N206, N242, N302, N335, N342, N381, N388, N398, N434, N441, and N447. The region spanning 424-558 (NFPYYPLNPF…KMAWLVLDGS (135 aa)) is the Plastocyanin-like 3 domain. Positions 475, 478, 480, 537, 538, 539, and 543 each coordinate Cu cation.

This sequence belongs to the multicopper oxidase family. Cu cation is required as a cofactor.

It localises to the secreted. Its subcellular location is the extracellular space. The protein resides in the apoplast. The enzyme catalyses 4 hydroquinone + O2 = 4 benzosemiquinone + 2 H2O. Functionally, lignin degradation and detoxification of lignin-derived products. The polypeptide is Laccase-12 (LAC12) (Oryza sativa subsp. japonica (Rice)).